The sequence spans 201 residues: Ribosome maturation factor RimP (201 aa).

The protein belongs to the RimP family.

It localises to the cytoplasm. In terms of biological role, required for maturation of 30S ribosomal subunits. This Rhizobium johnstonii (strain DSM 114642 / LMG 32736 / 3841) (Rhizobium leguminosarum bv. viciae) protein is Ribosome maturation factor RimP.